The following is a 129-amino-acid chain: Follitropin subunit beta (129 aa).

The N-terminal stretch at Met1–Ser20 is a signal peptide. Intrachain disulfides connect Cys21-Cys69, Cys35-Cys84, Cys38-Cys122, Cys46-Cys100, Cys50-Cys102, and Cys105-Cys112. 2 N-linked (GlcNAc...) asparagine glycosylation sites follow: Asn25 and Asn42.

Belongs to the glycoprotein hormones subunit beta family. As to quaternary structure, heterodimer. The active follitropin is a heterodimer composed of an alpha chain/CGA shared with other hormones and a unique beta chain/FSHB shown here.

The protein localises to the secreted. Its function is as follows. Together with the alpha chain CGA constitutes follitropin, the follicle-stimulating hormone, and provides its biological specificity to the hormone heterodimer. Binds FSHR, a G protein-coupled receptor, on target cells to activate downstream signaling pathways. Follitropin is involved in follicle development and spermatogenesis in reproductive organs. The protein is Follitropin subunit beta (FSHB) of Gorilla gorilla gorilla (Western lowland gorilla).